The primary structure comprises 53 residues: VTSYTLSDVVPLKDVVPEWVRIGFSATPGAEYAAHEVLSWSFHSELSGTSSKQ.

This sequence belongs to the leguminous lectin family. Heterodimer of an alpha and a beta chain.

This lectin specifically binds mannose and glucose. This Vicia cracca (Bird vetch) protein is Mannose/glucose-specific lectin alpha chain.